Here is a 114-residue protein sequence, read N- to C-terminus: Cell division protein FtsB (114 aa).

Over 1–3 the chain is Cytoplasmic; it reads MGK. Residues 4–21 form a helical membrane-spanning segment; sequence LTLLLVVLLGWLQYSLWV. Residues 22-114 lie on the Periplasmic side of the membrane; it reads GKNGVHDYMR…ASYPSVTASH (93 aa). A coiled-coil region spans residues 31 to 62; it reads RVKQDVATQQANNAKLKSRNDQLFAEIDDLNG.

It belongs to the FtsB family. In terms of assembly, part of a complex composed of FtsB, FtsL and FtsQ.

It is found in the cell inner membrane. Functionally, essential cell division protein. May link together the upstream cell division proteins, which are predominantly cytoplasmic, with the downstream cell division proteins, which are predominantly periplasmic. The sequence is that of Cell division protein FtsB from Edwardsiella ictaluri (strain 93-146).